A 121-amino-acid polypeptide reads, in one-letter code: Alpha-lactalbumin (121 aa).

Residues 1-121 (IDYRKCQASQ…CLEDLDQWRC (121 aa)) form the C-type lysozyme domain. 4 disulfide bridges follow: Cys6/Cys121, Cys28/Cys112, Cys61/Cys77, and Cys73/Cys91. N-linked (GlcNAc...) asparagine glycosylation is present at Asn44. Lys79, Asp82, Asp84, Asp87, and Asp88 together coordinate Ca(2+).

It belongs to the glycosyl hydrolase 22 family. Lactose synthase (LS) is a heterodimer of a catalytic component, beta1,4-galactosyltransferase (beta4Gal-T1) and a regulatory component, alpha-lactalbumin (LA). In terms of tissue distribution, mammary gland specific. Secreted in milk.

The protein resides in the secreted. Its function is as follows. Regulatory subunit of lactose synthase, changes the substrate specificity of galactosyltransferase in the mammary gland making glucose a good acceptor substrate for this enzyme. This enables LS to synthesize lactose, the major carbohydrate component of milk. In other tissues, galactosyltransferase transfers galactose onto the N-acetylglucosamine of the oligosaccharide chains in glycoproteins. The sequence is that of Alpha-lactalbumin (LALBA) from Notamacropus rufogriseus (Red-necked wallaby).